We begin with the raw amino-acid sequence, 362 residues long: Ribosome-binding ATPase YchF (362 aa).

An OBG-type G domain is found at 2 to 258; that stretch reads LSAGIVGLPN…LDANGRQDWL (257 aa). 11 to 16 lines the ATP pocket; the sequence is NVGKST. S15 and T35 together coordinate Mg(2+). Positions 281 to 347 constitute a TGS domain; the sequence is GLWSFFTFGK…EAKKQGLVRL (67 aa).

This sequence belongs to the TRAFAC class OBG-HflX-like GTPase superfamily. OBG GTPase family. YchF/OLA1 subfamily. Mg(2+) serves as cofactor.

Functionally, ATPase that binds to both the 70S ribosome and the 50S ribosomal subunit in a nucleotide-independent manner. The sequence is that of Ribosome-binding ATPase YchF from Mycoplasma pneumoniae (strain ATCC 29342 / M129 / Subtype 1) (Mycoplasmoides pneumoniae).